The primary structure comprises 451 residues: Ubiquitin hydrolase B (451 aa).

A USP domain is found at 19 to 450; it reads RGLINTSNTC…EAYLLLYQLV (432 aa). A compositionally biased stretch (low complexity) spans 83 to 115; it reads NNSNSTTTTSSSSTTATTTSTSNNNKSQTPTSP. Residues 83–154 are disordered; it reads NNSNSTTTTS…PPINPKHFND (72 aa). Over residues 116 to 135 the composition is skewed to polar residues; that stretch reads IQQHHQSQTNGLSNQPSVAT. His399 (nucleophile) is an active-site residue. The Proton acceptor role is filled by His408.

The protein belongs to the peptidase C19 family. In terms of assembly, interacts with mkkA (via F-box/WD40 domains).

The catalysed reaction is Thiol-dependent hydrolysis of ester, thioester, amide, peptide and isopeptide bonds formed by the C-terminal Gly of ubiquitin (a 76-residue protein attached to proteins as an intracellular targeting signal).. Functionally, required for proper prespore cell patterning. Plays a role in stabilizing mkkA by preventing it from being targeted for degradation. ubcB and ubpB differentially control ubiquitination/deubiquitination and degradation of mkkA in a cell-type-specific and temporally regulated manner. The chain is Ubiquitin hydrolase B (ubpB) from Dictyostelium discoideum (Social amoeba).